The primary structure comprises 196 residues: Internal virion protein gp14 (196 aa).

This sequence belongs to the T7virus internal virion protein gp14 family. As to quaternary structure, interacts with the portal protein. Interacts with gp15.

It is found in the virion. Its subcellular location is the host cell outer membrane. In terms of biological role, component of the cylindrical core that assembles on the inner surface of the capsid during capsid formation and plays a role in viral DNA ejection into the host cell. The inner core is composed of stacked rings of gp14, gp15 and gp16 proteins. Following binding to the host cell surface, the internal core is disassembled and gp14 is ejected along with gp15 and gp16 into the infected cell. May form a simple channel spanning the outer membrane. The protein is Internal virion protein gp14 of Escherichia phage T7 (Bacteriophage T7).